A 2038-amino-acid polypeptide reads, in one-letter code: Homeotic protein female sterile (2038 aa).

One can recognise a Bromo 1 domain in the interval 34–140 (RNTNQLQYLI…KVFLQKIESM (107 aa)). Residues 145-284 (LELEPVTAKG…TTAMAGGVGG (140 aa)) form a disordered region. Low complexity-rich tracts occupy residues 177–209 (GSGT…SGLQ) and 268–279 (PGSTNTTTTAMA). A helical transmembrane segment spans residues 330-350 (AAVAAAAAAAAAAAAAAGGAA). A disordered region spans residues 396–432 (KGVKRKADTTTPTANAFESPYTQMDSKSAKIATRRES). The span at 404–421 (TTTPTANAFESPYTQMDS) shows a compositional bias: polar residues. The chain crosses the membrane as a helical span at residues 451 to 471 (VSGVPGLGGLVAGGVAGVAVA). Phosphoserine is present on serine 452. A Bromo 2 domain is found at 475-584 (EKLSDALKSC…DVFEMRYANI (110 aa)). Disordered stretches follow at residues 590–655 (ANAA…ERSA) and 677–735 (EASA…SVPG). Positions 593–619 (AHHHGHGHGHGHGHGHGHGHGHGHGHG) are enriched in basic residues. Over residues 636–649 (SSEDSSDTENESNS) the composition is skewed to acidic residues. Residues 681 to 694 (KKKAKKKLKEKKKS) show a composition bias toward basic residues. A compositionally biased stretch (gly residues) spans 711–735 (TGGGANAGGAGGPGSGGHGSVSVPG). Transmembrane regions (helical) follow at residues 750 to 770 (LNAL…AGGV), 790 to 810 (MAGG…AAGA), and 816 to 830 (AGTL…AAAG). 10 disordered regions span residues 832-858 (GGTT…SGAG), 891-956 (AGAA…SYDE), 1016-1139 (CLRK…GGNL), 1217-1260 (AVSA…ATVA), 1384-1416 (QPAG…QQQQ), 1502-1530 (MQQM…QQQH), 1580-1616 (IESM…PNAA), 1645-1728 (WSSL…VAQA), 1745-1918 (AAAA…SGAI), and 1957-2023 (MESG…GQID). The chain crosses the membrane as a helical span at residues 874–894 (GAAGAAAGAGSVGGVGGAGAA). Gly residues predominate over residues 910 to 927 (GAGGGVGGANASAGGAGA). The NET domain occupies 942–1024 (DSEEEDTAKP…SCLRKKTHKK (83 aa)). Serine 943 carries the phosphoserine modification. A compositionally biased stretch (basic residues) spans 1017–1027 (LRKKTHKKPSG). Residues 1028 to 1046 (KSKDEQMAEKKQELEKRLQ) are compositionally biased toward basic and acidic residues. Low complexity predominate over residues 1079–1100 (SSSSSSSDSSSSSSSDSSSSDS). Polar residues-rich tracts occupy residues 1121–1131 (SNGSNVNNPSI) and 1222–1232 (TGQQHNKNGPN). The span at 1645 to 1665 (WSSLASANSPQSHTSSSSSSS) shows a compositional bias: low complexity. Phosphoserine is present on serine 1653. Positions 1680–1708 (KAKERDRLKLLEAAEKEKKNQKEAAEKEQ) are enriched in basic and acidic residues. Composition is skewed to low complexity over residues 1716–1728 (SSSS…VAQA) and 1745–1760 (AAAA…PSGG). The chain crosses the membrane as a helical span at residues 1731–1751 (IAAATAAAAVTLGAAAAAALA). Residues 1776–1791 (GDRDRDRDRERERERS) show a composition bias toward basic and acidic residues. The span at 1800-1813 (NGNNSSNSANSNGP) shows a compositional bias: low complexity. 2 stretches are compositionally biased toward gly residues: residues 1814–1828 (GSAG…GGSG) and 1835–1856 (PNSG…GGGP). The span at 1857–1884 (ALLNAGSNSNSGVGSGGAASSNSNSSVG) shows a compositional bias: low complexity. Residues 1885-1915 (GIVGSGGPGSNSQGSSGGGGGGPASGGGMGS) show a composition bias toward gly residues. Residues 1939-1959 (VAAAVAAQAILAASPLGAMES) form a helical membrane-spanning segment. 2 positions are modified to phosphoserine: serine 1980 and serine 1988. Low complexity predominate over residues 1986-1997 (QSSPAQQSPQDR). A compositionally biased stretch (basic and acidic residues) spans 1998–2017 (AAAKRAEQRRAEQERRRREA).

It localises to the membrane. Required maternally for proper expression of other homeotic genes involved in pattern formation, such as Ubx. In Drosophila melanogaster (Fruit fly), this protein is Homeotic protein female sterile (fs(1)h).